The chain runs to 184 residues: Phosphonoformate cytidylyltransferase (184 aa).

The catalysed reaction is phosphonoformate + CTP = CMP-5'-phosphonoformate + diphosphate. The protein operates within secondary metabolite biosynthesis; bialaphos biosynthesis. Its function is as follows. Catalyzes the displacement of the beta- and gamma-phosphates of CTP by phosphonoformate to produce CMP-5'-phosphonoformate, an intermediate in the biosynthesis of phosphinothricin tripeptide (PTT), also known as bialaphos (BA), a natural-product antibiotic and potent herbicide. In Streptomyces viridochromogenes (strain DSM 40736 / JCM 4977 / BCRC 1201 / Tue 494), this protein is Phosphonoformate cytidylyltransferase.